Reading from the N-terminus, the 341-residue chain is MQQLTIAIDAMGGDFGPQVTVPAVVQALSQFPELKVTVVGDRDAISTQLTHLNYTLNPRFSIVHSDSVIGNNTQPSKALRHSRGSSMRMALDLVASKDVDACISAGNTGALMGLSRFTLKLLPGVERPALISPLPTKNNQRTWMLDLGANVSCDAETLFQFAVMGSELAEQSIGRKAKVALLNIGEEEIKGNDQIKRCAEMLNQCQNIEFIGYIEGDKLYQGIADVVVCDGFVGNVCLKTSEGVAHLFLDQLKSQLLTSKFKQILAKWLFGDVISSLKGLNPDQYNGASLIGLRGIVVKSHGSADISAFNNAIKEAVHEIKRQIPNRISDRLEAVLLERHY.

It belongs to the PlsX family. Homodimer. Probably interacts with PlsY.

It localises to the cytoplasm. The enzyme catalyses a fatty acyl-[ACP] + phosphate = an acyl phosphate + holo-[ACP]. It functions in the pathway lipid metabolism; phospholipid metabolism. In terms of biological role, catalyzes the reversible formation of acyl-phosphate (acyl-PO(4)) from acyl-[acyl-carrier-protein] (acyl-ACP). This enzyme utilizes acyl-ACP as fatty acyl donor, but not acyl-CoA. In Aliivibrio salmonicida (strain LFI1238) (Vibrio salmonicida (strain LFI1238)), this protein is Phosphate acyltransferase.